The primary structure comprises 1123 residues: MDKYEEIKTIGKGSFGRAILVKRKSDGLLLVLKEINVMEMQPKERSDAMNEVNLLSMLDHENIIGYYDSFILNGCLYIIMEYANAGDINLEIKKRTLQNKTFSEFEILSWFSQICKALQYISSRNILHRDLKTQNIFLSIVNGDYFIKLGDFGIAKILNSETSLASTVLGTPYYLSPELIQNEKGYDHKSDIWSLGCVLYELTTLKHAFNAANLPALVLKILKGTYPPIPSHYSNDLRNLISSMLQIDPKNRPSVNDILELPFINQYLGIPLKPFDSNLNENNNDSLNISNNSSGSNNSASNNISSSTEVKDQKFQNIPLAMARNINNNNNNNNNNNNNNNNNNNNNNNNNNNNNNNNNNNNNNNNKSNVDDVNSSSTTTTSSSIVKSKVNTTVSPPLSPKKPITTTTTKTTSLKTTPSIKPTLVKTPTIKSSLVKTPLSKTPISGTKNPTTSKITPSIKTPLPKAPISSKTPTRLVSKPTTPKITTPKSTSTMITPKRTTTTTTTPTPTTATTTPKKSSLSSSSSSSVKPPPPTTTTTTPSKDRSSVNTINKPMASNLSSQISSSSSSSSSSNSQFRPTTPSKERMSPTSTSTKSPTNPSPTLSSSSSLPKSSLKSDSLCTSPPRFSNTTGSSGGIGVSGNGNSNVNSTVLNRSVSSLSIQHKPTNSGSSSISSSSSGNNSNSNTTTNNNTTSTTPIRPGLKSTKSMLELSTPTSISTSNKSTTTTPTSSRSNTPSTGRLSLTTSIPRPPSSNGSNTGSSSSTTTTPTKISTTSSSSSLNKLTTPIKSSTTTSTTASTNSQTIKKSITPIKVTSQQVDSTISNIKNNIVIGNSVSTKTNISVISHLSPSIKPLPTQSIITQLPTSASTASTASTTNTTLTSGTNTMTTKKRTDFKLDDLGHRSKLNSVKLSSKSSSPIKTSSSSSSSSSSSSSITDKKSINRVKLNNLKEKNKEIINNIKISSTIPKPSNINSSSSSAFSDLNSSGSSSLNNSLTSSSSSIITNQNNQNNQNNQNNQNNQNNLKIINELILQNNLNNSISKENLDDKRLHSRANALRHFCSSIFGEDKFKETYNLLKSQSPSTSNNEIVDIASIENQLSQLIGDKIYYLKYLQQLIYCESQI.

Positions 4–264 constitute a Protein kinase domain; the sequence is YEEIKTIGKG…VNDILELPFI (261 aa). ATP-binding positions include 10–18 and K33; that span reads IGKGSFGRA. D130 (proton acceptor) is an active-site residue. 2 stretches are compositionally biased toward low complexity: residues 283 to 307 and 327 to 415; these read NNDSLNISNNSSGSNNSASNNISSS and NNNN…TSLK. Disordered regions lie at residues 283 to 310, 325 to 415, 440 to 802, 866 to 887, 908 to 937, and 990 to 1020; these read NNDSLNISNNSSGSNNSASNNISSSTEV, NINN…TSLK, SKTP…TNSQ, SASTASTASTTNTTLTSGTNTM, SVKLSSKSSSPIKTSSSSSSSSSSSSSITD, and SLNNSLTSSSSSIITNQNNQNNQNNQNNQNN. Over residues 440 to 459 the composition is skewed to polar residues; it reads SKTPISGTKNPTTSKITPSI. Low complexity-rich tracts occupy residues 478 to 529, 557 to 576, 588 to 617, and 642 to 653; these read SKPT…SSSV, SNLSSQISSSSSSSSSSNSQ, SPTSTSTKSPTNPSPTLSSSSSLPKSSLKS, and NGNSNVNSTVLN. The segment covering 654 to 665 has biased composition (polar residues); it reads RSVSSLSIQHKP. 3 stretches are compositionally biased toward low complexity: residues 666-696, 712-738, and 752-802; these read TNSGSSSISSSSSGNNSNSNTTTNNNTTSTT, STPTSISTSNKSTTTTPTSSRSNTPST, and SSNG…TNSQ. Over residues 908–935 the composition is skewed to low complexity; the sequence is SVKLSSKSSSPIKTSSSSSSSSSSSSSI.

It belongs to the protein kinase superfamily. NEK Ser/Thr protein kinase family. NIMA subfamily.

The catalysed reaction is L-seryl-[protein] + ATP = O-phospho-L-seryl-[protein] + ADP + H(+). The enzyme catalyses L-threonyl-[protein] + ATP = O-phospho-L-threonyl-[protein] + ADP + H(+). The chain is Probable serine/threonine-protein kinase nek3 (nek3) from Dictyostelium discoideum (Social amoeba).